The chain runs to 357 residues: Protein-glutamate methylesterase/protein-glutamine glutaminase (357 aa).

The Response regulatory domain occupies 3 to 120 (RVLVVDDSAF…SLDLYKIKEQ (118 aa)). Asp-54 bears the 4-aspartylphosphate mark. One can recognise a CheB-type methylesterase domain in the interval 161 to 355 (PGTGRQIVCI…ASITSCVKKE (195 aa)). Residues Ser-173, His-200, and Asp-296 contribute to the active site.

The protein belongs to the CheB family. Post-translationally, phosphorylated by CheA. Phosphorylation of the N-terminal regulatory domain activates the methylesterase activity.

It localises to the cytoplasm. It catalyses the reaction [protein]-L-glutamate 5-O-methyl ester + H2O = L-glutamyl-[protein] + methanol + H(+). The enzyme catalyses L-glutaminyl-[protein] + H2O = L-glutamyl-[protein] + NH4(+). In terms of biological role, involved in the modulation of the chemotaxis system; catalyzes the demethylation of specific methylglutamate residues introduced into the chemoreceptors (methyl-accepting chemotaxis proteins) by CheR. B.subtilis has an effective methylation-independent adaptation system but must utilize the methylation system for adaptation to high concentrations of attractant. In Bacillus subtilis (strain 168), this protein is Protein-glutamate methylesterase/protein-glutamine glutaminase.